Consider the following 351-residue polypeptide: Anthranilate phosphoribosyltransferase (351 aa).

Residues Gly85, 88 to 89 (GD), Ser93, 95 to 98 (NIST), 113 to 121 (KHGNRAASS), and Thr125 contribute to the 5-phospho-alpha-D-ribose 1-diphosphate site. Gly85 contacts anthranilate. Ser97 contacts Mg(2+). Asn116 contacts anthranilate. Arg171 serves as a coordination point for anthranilate. Asp229 and Glu230 together coordinate Mg(2+).

The protein belongs to the anthranilate phosphoribosyltransferase family. As to quaternary structure, homodimer. Requires Mg(2+) as cofactor.

It catalyses the reaction N-(5-phospho-beta-D-ribosyl)anthranilate + diphosphate = 5-phospho-alpha-D-ribose 1-diphosphate + anthranilate. It functions in the pathway amino-acid biosynthesis; L-tryptophan biosynthesis; L-tryptophan from chorismate: step 2/5. Its function is as follows. Catalyzes the transfer of the phosphoribosyl group of 5-phosphorylribose-1-pyrophosphate (PRPP) to anthranilate to yield N-(5'-phosphoribosyl)-anthranilate (PRA). The polypeptide is Anthranilate phosphoribosyltransferase (Saccharopolyspora erythraea (strain ATCC 11635 / DSM 40517 / JCM 4748 / NBRC 13426 / NCIMB 8594 / NRRL 2338)).